We begin with the raw amino-acid sequence, 173 residues long: NADH-ubiquinone oxidoreductase chain 6 (173 aa).

A run of 5 helical transmembrane segments spans residues 1 to 21 (MVYF…GVAS), 28 to 48 (AALG…SYGG), 53 to 73 (LILF…TAAL), 87 to 107 (VLMY…YFLV), and 139 to 159 (LGGW…FVVL).

The protein belongs to the complex I subunit 6 family.

Its subcellular location is the mitochondrion membrane. It catalyses the reaction a ubiquinone + NADH + 5 H(+)(in) = a ubiquinol + NAD(+) + 4 H(+)(out). In terms of biological role, core subunit of the mitochondrial membrane respiratory chain NADH dehydrogenase (Complex I) that is believed to belong to the minimal assembly required for catalysis. Complex I functions in the transfer of electrons from NADH to the respiratory chain. The immediate electron acceptor for the enzyme is believed to be ubiquinone. This chain is NADH-ubiquinone oxidoreductase chain 6 (MT-ND6), found in Scyliorhinus canicula (Small-spotted catshark).